Consider the following 453-residue polypeptide: V-type proton ATPase subunit B (453 aa).

ATP is bound at residue Arg341.

This sequence belongs to the ATPase alpha/beta chains family. In terms of assembly, V-ATPase is a heteromultimeric enzyme made up of two complexes: the ATP-hydrolytic V1 complex and the proton translocation V0 complex. The V1 complex consists of three catalytic AB heterodimers that form a heterohexamer, three peripheral stalks each consisting of EG heterodimers, one central rotor including subunits D and F, and the regulatory subunits C and H. The proton translocation complex V0 consists of the proton transport subunit a, a ring of proteolipid subunits c9c'', rotary subunit d, subunits e and f, and two accessory subunits.

In terms of biological role, non-catalytic subunit of the V1 complex of vacuolar(H+)-ATPase (V-ATPase), a multisubunit enzyme composed of a peripheral complex (V1) that hydrolyzes ATP and a membrane integral complex (V0) that translocates protons. V-ATPase is responsible for acidifying and maintaining the pH of intracellular compartments and in some cell types, is targeted to the plasma membrane, where it is responsible for acidifying the extracellular environment. Essential for the proper assembly and activity of V-ATPase. This is V-type proton ATPase subunit B (ATP6V1B) from Gallus gallus (Chicken).